The primary structure comprises 426 residues: Zinc finger protein 662 (426 aa).

The KRAB domain maps to 1 to 44 (MLENYGAVASLAAFPFPKPALISQLERGETPWCSVPRGALDGEA). 8 consecutive C2H2-type zinc fingers follow at residues 192 to 214 (YICE…QKTH), 220 to 242 (YGCK…QRIH), 248 to 270 (YECQ…QRIH), 276 to 298 (FECK…QRIH), 304 to 326 (YTCK…QRMH), 332 to 354 (YECK…QRVH), 360 to 382 (HECT…QRIH), and 388 to 410 (YKCN…QRRH).

This sequence belongs to the krueppel C2H2-type zinc-finger protein family.

The protein resides in the nucleus. Its function is as follows. May be involved in transcriptional regulation. This Homo sapiens (Human) protein is Zinc finger protein 662 (ZNF662).